The following is a 195-amino-acid chain: HTH-type transcriptional regulator BetI (195 aa).

Residues 8 to 68 enclose the HTH tetR-type domain; the sequence is SIRRRQLIDA…ATMRDITSQL (61 aa). The H-T-H motif DNA-binding region spans 31 to 50; it reads TIAQIARRAGVSTGIISHYF.

The protein operates within amine and polyamine biosynthesis; betaine biosynthesis via choline pathway [regulation]. Repressor involved in the biosynthesis of the osmoprotectant glycine betaine. It represses transcription of the choline transporter BetT and the genes of BetAB involved in the synthesis of glycine betaine. The sequence is that of HTH-type transcriptional regulator BetI from Escherichia coli O8 (strain IAI1).